Consider the following 71-residue polypeptide: Protein SlyX homolog (71 aa).

The disordered stretch occupies residues 49-71; that stretch reads KIKESQSSSSMMSNEPEPPPPHY.

The protein belongs to the SlyX family.

The protein is Protein SlyX homolog of Pseudoalteromonas translucida (strain TAC 125).